We begin with the raw amino-acid sequence, 319 residues long: Ferrochelatase (319 aa).

2 residues coordinate Fe cation: histidine 193 and glutamate 274.

The protein belongs to the ferrochelatase family.

Its subcellular location is the cytoplasm. It catalyses the reaction heme b + 2 H(+) = protoporphyrin IX + Fe(2+). The protein operates within porphyrin-containing compound metabolism; protoheme biosynthesis; protoheme from protoporphyrin-IX: step 1/1. Functionally, catalyzes the ferrous insertion into protoporphyrin IX. This is Ferrochelatase from Erwinia tasmaniensis (strain DSM 17950 / CFBP 7177 / CIP 109463 / NCPPB 4357 / Et1/99).